Reading from the N-terminus, the 457-residue chain is Cysteine desulfurase (457 aa).

Pyridoxal 5'-phosphate is bound by residues Ala127, Thr128, Gln235, Ser255, and His257. At Lys258 the chain carries N6-(pyridoxal phosphate)lysine. Thr295 lines the pyridoxal 5'-phosphate pocket. The Cysteine persulfide intermediate role is filled by Cys381. Cys381 is a binding site for [2Fe-2S] cluster. Cys381 provides a ligand contact to Zn(2+). Cys381 is modified (cysteine persulfide).

This sequence belongs to the class-V pyridoxal-phosphate-dependent aminotransferase family. NifS/IscS subfamily. As to quaternary structure, homodimer. Component of the mitochondrial core iron-sulfur cluster (ISC) complex composed of NFS1, LYRM4, NDUFAB1, ISCU, FXN, and FDX2; this complex is a heterohexamer containing two copies of each monomer. Component of cyteine desulfurase complex composed of NFS1, LYRM4 and NDUFAB1; this complex contributes to the activation of cysteine desulfurase activity and NFS1 stabilization. Interacts (homodimer form) with ISCU (D-state); each monomer interacts with the C-terminal regions of each NFS1 monomer. Interacts with HSPA9. Interacts (via homodimer form) with FDX2. Interacts (via homodimer form) with FXN. Interacts with LYRM4. Component of a complex composed of FXN, NFS1, LYRM4 and ISCU. In terms of assembly, monomer. Homodimer. Oligomer. Interacts with ISCU. Component of the cysteine desulfurase complex composed of NFS1 and LYRM4; this complex contributes to the activation of cysteine desulfurase activity. Interacts with MOCS3. Pyridoxal 5'-phosphate is required as a cofactor. N-gluconoylated. In terms of processing, cysteine persulfide intermediate is reduced by thiol-containing molecules like glutathione and L-cysteine. Persulfide reduction is a rate-limiting step of cysteine desulfurase catalytic cycle.

It is found in the mitochondrion. It localises to the cytoplasm. The protein resides in the nucleus. The protein localises to the cytoskeleton. Its subcellular location is the microtubule organizing center. It is found in the centrosome. It carries out the reaction (sulfur carrier)-H + L-cysteine = (sulfur carrier)-SH + L-alanine. The enzyme catalyses L-cysteinyl-[cysteine desulfurase] + L-cysteine = S-sulfanyl-L-cysteinyl-[cysteine desulfurase] + L-alanine. Its activity is regulated as follows. Active only in complex with LYRM4. In terms of biological role, cysteine desulfurase, of the core iron-sulfur cluster (ISC) assembly complex, that catalyzes the desulfuration of L-cysteine to L-alanine, as component of the cysteine desulfurase complex leading to the formation of a cysteine persulfide intermediate at the active site cysteine residue and participates in the [2Fe-2S] clusters assembly on the scaffolding protein ISCU. The persulfide is then transferred on the flexible Cys loop from the catalytic site of NFS1 to the surface of NFS1. After the NFS1-linked persulfide sulfur is transferred to one of the conserved Cys residues of the scaffold, a reaction assisted by FXN. The core iron-sulfur cluster (ISC) assembly complex is involved in the de novo synthesis of a [2Fe-2S] cluster, the first step of the mitochondrial iron-sulfur protein biogenesis. This process is initiated by the cysteine desulfurase complex (NFS1:LYRM4:NDUFAB1) that produces persulfide which is delivered on the scaffold protein ISCU in a FXN-dependent manner. Then this complex is stabilized by FDX2 which provides reducing equivalents to accomplish the [2Fe-2S] cluster assembly. Finally, the [2Fe-2S] cluster is transferred from ISCU to chaperone proteins, including HSCB, HSPA9 and GLRX5. Functionally, may catalyze the desulfuration of L-cysteine to L-alanine as component of the cysteine desulfurase complex (NFS1:LYRM4), leading to the formation of a cysteine persulfide intermediate. Acts as a sulfur donor for MOCS3 by transferring the sulfur of the cysteine persulfide intermediate on MOCS3. The protein is Cysteine desulfurase of Pongo abelii (Sumatran orangutan).